A 62-amino-acid chain; its full sequence is Photosystem II reaction center protein Z (62 aa).

Helical transmembrane passes span 8–28 (AIFA…VVFA) and 41–61 (FSGT…NSLI).

Belongs to the PsbZ family. In terms of assembly, PSII is composed of 1 copy each of membrane proteins PsbA, PsbB, PsbC, PsbD, PsbE, PsbF, PsbH, PsbI, PsbJ, PsbK, PsbL, PsbM, PsbT, PsbY, PsbZ, Psb30/Ycf12, at least 3 peripheral proteins of the oxygen-evolving complex and a large number of cofactors. It forms dimeric complexes.

It is found in the plastid. It localises to the chloroplast thylakoid membrane. In terms of biological role, may control the interaction of photosystem II (PSII) cores with the light-harvesting antenna, regulates electron flow through the 2 photosystem reaction centers. PSII is a light-driven water plastoquinone oxidoreductase, using light energy to abstract electrons from H(2)O, generating a proton gradient subsequently used for ATP formation. The polypeptide is Photosystem II reaction center protein Z (Acorus gramineus (Dwarf sweet flag)).